Here is a 327-residue protein sequence, read N- to C-terminus: Glycerol-3-phosphate dehydrogenase [NAD(P)+] (327 aa).

Residues W11, H30, and K103 each contribute to the NADPH site. Sn-glycerol 3-phosphate contacts are provided by K103, G131, and S133. Position 135 (A135) interacts with NADPH. Positions 186, 243, 253, 254, and 255 each coordinate sn-glycerol 3-phosphate. K186 functions as the Proton acceptor in the catalytic mechanism. R254 serves as a coordination point for NADPH. Residues V281 and E283 each coordinate NADPH.

Belongs to the NAD-dependent glycerol-3-phosphate dehydrogenase family.

Its subcellular location is the cytoplasm. It carries out the reaction sn-glycerol 3-phosphate + NAD(+) = dihydroxyacetone phosphate + NADH + H(+). The catalysed reaction is sn-glycerol 3-phosphate + NADP(+) = dihydroxyacetone phosphate + NADPH + H(+). The protein operates within membrane lipid metabolism; glycerophospholipid metabolism. Functionally, catalyzes the reduction of the glycolytic intermediate dihydroxyacetone phosphate (DHAP) to sn-glycerol 3-phosphate (G3P), the key precursor for phospholipid synthesis. This chain is Glycerol-3-phosphate dehydrogenase [NAD(P)+], found in Wolbachia sp. subsp. Brugia malayi (strain TRS).